We begin with the raw amino-acid sequence, 862 residues long: DNA topoisomerase 3-beta-1 (862 aa).

The 151-residue stretch at 3–153 folds into the Toprim domain; that stretch reads TVLMVAEKPS…EKTVFRARFS (151 aa). The Topo IA-type catalytic domain occupies 171 to 593; sequence DHNEALSVDA…HTLDIFKRKF (423 aa). Tyr336 functions as the O-(5'-phospho-DNA)-tyrosine intermediate in the catalytic mechanism. The disordered stretch occupies residues 820–855; sequence HPMHRGGPGRRQGRGRGRGRRPPGKPNPRRPKDKMS. Positions 821–851 are enriched in basic residues; it reads PMHRGGPGRRQGRGRGRGRRPPGKPNPRRPK.

This sequence belongs to the type IA topoisomerase family. In terms of tissue distribution, highly expressed in testis.

It catalyses the reaction ATP-independent breakage of single-stranded DNA, followed by passage and rejoining.. Its function is as follows. Releases the supercoiling and torsional tension of DNA introduced during the DNA replication and transcription by transiently cleaving and rejoining one strand of the DNA duplex. Introduces a single-strand break via transesterification at a target site in duplex DNA. The scissile phosphodiester is attacked by the catalytic tyrosine of the enzyme, resulting in the formation of a DNA-(5'-phosphotyrosyl)-enzyme intermediate and the expulsion of a 3'-OH DNA strand. The free DNA strand than undergoes passage around the unbroken strand thus removing DNA supercoils. Finally, in the religation step, the DNA 3'-OH attacks the covalent intermediate to expel the active-site tyrosine and restore the DNA phosphodiester backbone. Possesses negatively supercoiled DNA relaxing activity. This chain is DNA topoisomerase 3-beta-1 (Top3b), found in Mus musculus (Mouse).